The chain runs to 548 residues: Glucose-6-phosphate isomerase (548 aa).

The active-site Proton donor is the glutamate 355. Catalysis depends on residues histidine 386 and lysine 511.

Belongs to the GPI family.

Its subcellular location is the cytoplasm. It carries out the reaction alpha-D-glucose 6-phosphate = beta-D-fructose 6-phosphate. Its pathway is carbohydrate biosynthesis; gluconeogenesis. It functions in the pathway carbohydrate degradation; glycolysis; D-glyceraldehyde 3-phosphate and glycerone phosphate from D-glucose: step 2/4. Catalyzes the reversible isomerization of glucose-6-phosphate to fructose-6-phosphate. In Wigglesworthia glossinidia brevipalpis, this protein is Glucose-6-phosphate isomerase.